Reading from the N-terminus, the 156-residue chain is Regulatory protein RecX (156 aa).

The protein belongs to the RecX family.

The protein localises to the cytoplasm. In terms of biological role, modulates RecA activity. The chain is Regulatory protein RecX from Pseudomonas putida (strain W619).